A 119-amino-acid chain; its full sequence is Autophagy-related protein 8B (119 aa).

The Phosphatidylethanolamine amidated glycine moiety is linked to residue G117. A propeptide spans 118–119 (LL) (removed in mature form).

Belongs to the ATG8 family. As to quaternary structure, interacts with ATG4. In terms of processing, the C-terminal 2 residues are removed by ATG4 to expose Gly-117 at the C-terminus. The C-terminal Gly is then amidated with phosphatidylethanolamine by an activating system similar to that for ubiquitin.

It is found in the cytoplasmic vesicle. It localises to the autophagosome membrane. The protein resides in the vacuole membrane. The protein localises to the cytoplasm. Its subcellular location is the cytoskeleton. Functionally, ubiquitin-like modifier involved in autophagosomes formation. May mediate the delivery of the autophagosomes to the vacuole via the microtubule cytoskeleton. The sequence is that of Autophagy-related protein 8B (ATG8B) from Oryza sativa subsp. indica (Rice).